The primary structure comprises 201 residues: Large ribosomal subunit protein uL4 (201 aa).

A disordered region spans residues 39–67 (ARQGSRAQKTRSEVAGGGRKPWKQKGSGR).

Belongs to the universal ribosomal protein uL4 family. Part of the 50S ribosomal subunit.

In terms of biological role, one of the primary rRNA binding proteins, this protein initially binds near the 5'-end of the 23S rRNA. It is important during the early stages of 50S assembly. It makes multiple contacts with different domains of the 23S rRNA in the assembled 50S subunit and ribosome. Its function is as follows. Forms part of the polypeptide exit tunnel. The protein is Large ribosomal subunit protein uL4 of Marinomonas sp. (strain MWYL1).